The chain runs to 181 residues: ADP-ribosylation factor 3 (181 aa).

Residue G2 is the site of N-myristoyl glycine attachment. GTP is bound by residues 24-31, 67-71, and 126-129; these read GLDAAGKT, DVGGQ, and NKQD.

Belongs to the small GTPase superfamily. Arf family. In terms of assembly, interacts with PRKCABP. Interacts with PI4KB and NCS1/FREQ at the Golgi complex.

The protein localises to the golgi apparatus. It is found in the cytoplasm. Its subcellular location is the perinuclear region. In terms of biological role, GTP-binding protein that functions as an allosteric activator of the cholera toxin catalytic subunit, an ADP-ribosyltransferase. Involved in protein trafficking; may modulate vesicle budding and uncoating within the Golgi apparatus. This Bos taurus (Bovine) protein is ADP-ribosylation factor 3 (ARF3).